The sequence spans 186 residues: Putative 3-methyladenine DNA glycosylase (186 aa).

This sequence belongs to the DNA glycosylase MPG family.

The sequence is that of Putative 3-methyladenine DNA glycosylase from Borreliella afzelii (strain PKo) (Borrelia afzelii).